Reading from the N-terminus, the 574-residue chain is MRTSQYLLTTTRETPADAEIISHQLMLRGSFIRRLAAGLYTWLPLGLRVLRKVENIIREEMDKAGAQEVLMPAVQPAELWRETGRWEQYGPELLRFTDRHQRFFCFGPTHEEVITDLIRREIRSYKQLPANFYQIQLKFRDEIRPRFGVMRSREFLMKDAYSFHPDQTSLAQTYNQMYETYSRIFDRIGLTFRAVQADTGAIGGKTSHEFHVLAASGEDAIAFSDKSTYAANVELAAALPPTDKPASPKETLSLIETPGQCTIKEISQFLNIPSSRCIKTLLVQGSEGELVALALRGDHELNAVKAQKLPQVANPLQFATPEQVWKTCNASIGSIGPMGLAIPLIADHGAVQLTDFACGANMEGKHFTGVNWGRDLPEPSTADIRNVVDGDPSPDGEGTLSIARGIEVGHIFQLGEKYSQAMNATVLDETGRAISLAMGCYGIGVSRVVAAAIEQNHDEHGIIWPASIAPFQLALVPINAHKSARVKEMSDRLYTELQAAGFEVLLDDRQLRPGVIFADMDLIGIPYRLVISERGLENNTVEYKRRQDGKTCAIQLDNFISGLKAELKAPISRR.

The protein belongs to the class-II aminoacyl-tRNA synthetase family. ProS type 1 subfamily. Homodimer.

The protein resides in the cytoplasm. It carries out the reaction tRNA(Pro) + L-proline + ATP = L-prolyl-tRNA(Pro) + AMP + diphosphate. Functionally, catalyzes the attachment of proline to tRNA(Pro) in a two-step reaction: proline is first activated by ATP to form Pro-AMP and then transferred to the acceptor end of tRNA(Pro). As ProRS can inadvertently accommodate and process non-cognate amino acids such as alanine and cysteine, to avoid such errors it has two additional distinct editing activities against alanine. One activity is designated as 'pretransfer' editing and involves the tRNA(Pro)-independent hydrolysis of activated Ala-AMP. The other activity is designated 'posttransfer' editing and involves deacylation of mischarged Ala-tRNA(Pro). The misacylated Cys-tRNA(Pro) is not edited by ProRS. The sequence is that of Proline--tRNA ligase from Nitrosococcus oceani (strain ATCC 19707 / BCRC 17464 / JCM 30415 / NCIMB 11848 / C-107).